The following is a 911-amino-acid chain: Hexon protein (911 aa).

The residue at position 2 (A2) is an N-acetylalanine; by host. A Phosphotyrosine; by host modification is found at Y899.

Belongs to the adenoviridae hexon protein family. Homotrimer. Interacts with the capsid vertex protein; this interaction binds the peripentonal hexons to the neighboring penton base. Interacts with the hexon-linking protein; this interaction tethers the hexons surrounding the penton to those situated in the central plate of the facet. Interacts with the hexon-interlacing protein; this interaction lashes the hexons together. Interacts with host dyneins DYNC1LI1 and DYNC1I2; this interaction might be involved in intracellular microtubule-dependent transport of incoming viral capsid. Interacts with the shutoff protein; this interaction allows folding and formation of hexons trimers. Interacts with pre-protein VI; this interaction probably allows nuclear import of hexon trimers and possibly pre-capsid assembly.

It localises to the virion. It is found in the host nucleus. Functionally, major capsid protein that self-associates to form 240 hexon trimers, each in the shape of a hexagon, building most of the pseudo T=25 capsid. Assembled into trimeric units with the help of the chaperone shutoff protein. Transported by pre-protein VI to the nucleus where it associates with other structural proteins to form an empty capsid. Might be involved, through its interaction with host dyneins, in the intracellular microtubule-dependent transport of incoming viral capsid to the nucleus. The polypeptide is Hexon protein (Bos taurus (Bovine)).